A 1004-amino-acid chain; its full sequence is MVQLYNLHPFGSQQVVPCKLEPDRFCGGGRDALFVAAGCKVEAFAVAGQELCQPRCAFSTLGRVLRLAYSEAGDYLVAIEEKNKATFLRAYVNWRNKRTENSRVCIRMIGHNVEGPFSKAFRDQMYIIEMPLSEAPLCISCCPVKGDLLVGCTNKLVLFSLKYQIINEEFSLLDFERSLIIHIDNITPVEVSFCVGYVAVMSDLEVLIVKLESGPKNGERVHHHPHKTNNRIRRTEEGISNEISQLESDDFVICQKPLELLGEKSEQSGLSVTLESTGLADEKRKYSHFQHLLYRRFAPDISSYVLSDDIKLHSLQLLPIYQTGSLTSDGKNLSQEKELLSLFCFFSLPHVGYLYMVVKSVELMSVYQYPEKSQQAVLTPQFLHVITSNNLQCFTVRCSAAAAREEDPYMDTTLKACPPVSMDVCALRIQLFIGLKAICHFKNHIILLTKAEPEAIPERRQSPKRLLSRKDTSVKIKIPPVAEAGWNLYIVNTISPVQLYKEMVDYSNTYKTVKTQSCIHLLSEAHLLVRAALMDASQLEPGEKAELLEAFKESCGHLGDCYSRLDSQHSHLTLPYYKMSGLSMAEVLARTDWTVEDGLQKYERGLIFYINHSLYENLDEELNEELAAKVVQMFYVAEPKQVPHILCSPSMKNINPLTAMSYLRKLDTSGFSSILVTLTKAAVALKMGDLDMHRNEMKSHSEMKLVCGFILEPRLLIQQRKGQIVPTELALHLKETQPGLLVASVLGLQKNNKIGIEEADSFFKVLCAKDEDTIPQLLVDFWEAQLVACLPDVVLQELFFKLTSQYIWRLSKRQPPDTTPLRTSEDLINACSHYGLIYPWVHVVISSDSLADKNYTEDLSKLQSLICGPSFDIASIIPFLEPLSEDTIAGLSVHVLCRTRLKEYEQCIDILLERCPEAVIPYANHELKEENRTLWWKKLLPELCQRIKCGGEKYQLYLSSLKETLSIVAVELELKDFMNVLPEDGTATFFLPYLLYCSRKKPLT.

Positions 172-176 (LLDFE) match the Clathrin-binding motif.

In terms of assembly, component of the biogenesis of lysosome-related organelles complex-2 (or BLOC2) composed of HPS3, HPS5 and HPS6. Interacts with HPS5. Interacts with HPS6. In terms of tissue distribution, widely expressed. Higher levels of expression are observed in kidney, liver and placenta.

The protein localises to the cytoplasm. The protein resides in the cytosol. Functionally, involved in early stages of melanosome biogenesis and maturation. This is BLOC-2 complex member HPS3 (HPS3) from Homo sapiens (Human).